We begin with the raw amino-acid sequence, 596 residues long: NADH-quinone oxidoreductase subunit C/D (596 aa).

Positions 1–186 are NADH dehydrogenase I subunit C; the sequence is MMNDNKYIHI…PAFTLTRKKE (186 aa). Residues 210–596 form an NADH dehydrogenase I subunit D region; sequence DFMFLNLGPN…IDFVMSDVDR (387 aa).

The protein in the N-terminal section; belongs to the complex I 30 kDa subunit family. It in the C-terminal section; belongs to the complex I 49 kDa subunit family. In terms of assembly, NDH-1 is composed of 13 different subunits. Subunits NuoB, CD, E, F, and G constitute the peripheral sector of the complex.

It localises to the cell inner membrane. The enzyme catalyses a quinone + NADH + 5 H(+)(in) = a quinol + NAD(+) + 4 H(+)(out). In terms of biological role, NDH-1 shuttles electrons from NADH, via FMN and iron-sulfur (Fe-S) centers, to quinones in the respiratory chain. The immediate electron acceptor for the enzyme in this species is believed to be ubiquinone. Couples the redox reaction to proton translocation (for every two electrons transferred, four hydrogen ions are translocated across the cytoplasmic membrane), and thus conserves the redox energy in a proton gradient. In Blochmanniella floridana, this protein is NADH-quinone oxidoreductase subunit C/D.